The following is a 498-amino-acid chain: Guanosine-5'-triphosphate,3'-diphosphate pyrophosphatase (498 aa).

Belongs to the GppA/Ppx family. GppA subfamily.

The catalysed reaction is guanosine 3'-diphosphate 5'-triphosphate + H2O = guanosine 3',5'-bis(diphosphate) + phosphate + H(+). Its pathway is purine metabolism; ppGpp biosynthesis; ppGpp from GTP: step 2/2. Its function is as follows. Catalyzes the conversion of pppGpp to ppGpp. Guanosine pentaphosphate (pppGpp) is a cytoplasmic signaling molecule which together with ppGpp controls the 'stringent response', an adaptive process that allows bacteria to respond to amino acid starvation, resulting in the coordinated regulation of numerous cellular activities. The protein is Guanosine-5'-triphosphate,3'-diphosphate pyrophosphatase of Serratia proteamaculans (strain 568).